A 278-amino-acid chain; its full sequence is Ribosomal RNA small subunit methyltransferase A (278 aa).

The S-adenosyl-L-methionine site is built by N27, L29, G54, E75, D95, and N118.

This sequence belongs to the class I-like SAM-binding methyltransferase superfamily. rRNA adenine N(6)-methyltransferase family. RsmA subfamily.

It is found in the cytoplasm. The catalysed reaction is adenosine(1518)/adenosine(1519) in 16S rRNA + 4 S-adenosyl-L-methionine = N(6)-dimethyladenosine(1518)/N(6)-dimethyladenosine(1519) in 16S rRNA + 4 S-adenosyl-L-homocysteine + 4 H(+). Functionally, specifically dimethylates two adjacent adenosines (A1518 and A1519) in the loop of a conserved hairpin near the 3'-end of 16S rRNA in the 30S particle. May play a critical role in biogenesis of 30S subunits. The polypeptide is Ribosomal RNA small subunit methyltransferase A (Chlamydia abortus (strain DSM 27085 / S26/3) (Chlamydophila abortus)).